Here is a 717-residue protein sequence, read N- to C-terminus: Polyribonucleotide nucleotidyltransferase (717 aa).

D486 and D492 together coordinate Mg(2+). A KH domain is found at 553 to 612 (PKIVQLQIDIDKISLVIGSTGKTVKAITDEFEVRVQIEQDGRITLFGTDNLKMQKAKAKI). In terms of domain architecture, S1 motif spans 622-715 (GEIYDGIVKK…KFGKIELELA (94 aa)). Positions 650–681 (SNRSRSRDDRYGSDIRHSRYSNRNSRYGRDNR) are disordered. A compositionally biased stretch (basic and acidic residues) spans 654–666 (RSRDDRYGSDIRH).

Belongs to the polyribonucleotide nucleotidyltransferase family. Mg(2+) is required as a cofactor.

Its subcellular location is the cytoplasm. It carries out the reaction RNA(n+1) + phosphate = RNA(n) + a ribonucleoside 5'-diphosphate. Involved in mRNA degradation. Catalyzes the phosphorolysis of single-stranded polyribonucleotides processively in the 3'- to 5'-direction. The polypeptide is Polyribonucleotide nucleotidyltransferase (Borrelia duttonii (strain Ly)).